A 513-amino-acid polypeptide reads, in one-letter code: Nuclear pore complex protein NUP58 (513 aa).

Disordered regions lie at residues 28-62, 217-239, and 356-513; these read QTNS…QPQQ, SVGS…GQQQ, and RETA…TTRR. The span at 30 to 50 shows a compositional bias: polar residues; that stretch reads NSIFSQSQPQQTNSIFSQSQP. 2 stretches are compositionally biased toward low complexity: residues 51-62 and 217-227; these read QQTNSIFSQPQQ and SVGSQPSQGQG. A compositionally biased stretch (basic and acidic residues) spans 356–365; the sequence is RETAKQEAAA. Low complexity predominate over residues 377–386; sequence STTSTQPSTQ. The span at 393–427 shows a compositional bias: polar residues; the sequence is SSATPGGSNPPQTSVPTSNPSSGAGFSFLNTPASG. Positions 428–446 are enriched in low complexity; that stretch reads PSSSLFATPSSTAPTSSLF. 6 tandem repeats follow at residues 446 to 447, 458 to 459, 466 to 467, 473 to 474, 486 to 487, and 497 to 498. A 6 X 2 AA repeats of F-G region spans residues 446 to 498; it reads FGPSPTPTQTPLFGSSPASTFGSTQSLFGQTTPSLTMPSQFGGATPGSGASFG. Residues 452–484 are compositionally biased toward polar residues; that stretch reads PTQTPLFGSSPASTFGSTQSLFGQTTPSLTMPS. Residues 504-513 are compositionally biased toward basic residues; it reads SRPKSRTTRR.

It belongs to the NUP58 family. In terms of assembly, part of the nuclear pore complex (NPC). The NPC has an eight-fold symmetrical structure comprising a central transport channel and two rings, the cytoplasmic and nuclear rings, to which eight filaments are attached. The cytoplasmic filaments have loose ends, while the nuclear filaments are joined in a distal ring, forming a nuclear basket. NPCs are highly dynamic in configuration and composition, and can be devided in 3 subcomplexes, the NUP62 subcomplex, the NUP107-160 subcomplex and the NUP93 subcomplex, containing approximately 30 different nucleoporin proteins. Interacts with GAI, NUP62, SKP1A and SKP1B. In terms of tissue distribution, ubiquitous. Higherst expression in cauline leaves, lowest in roots.

It is found in the nucleus envelope. Its subcellular location is the nucleus. The protein localises to the nuclear pore complex. Its function is as follows. Involved in nucleocytoplasmic trafficking. May have regulatory roles in the gibberellin pathway, in auxin signaling and in light perception. The polypeptide is Nuclear pore complex protein NUP58 (Arabidopsis thaliana (Mouse-ear cress)).